The primary structure comprises 96 residues: Small ribosomal subunit protein uS19 (96 aa).

It belongs to the universal ribosomal protein uS19 family.

Protein S19 forms a complex with S13 that binds strongly to the 16S ribosomal RNA. This chain is Small ribosomal subunit protein uS19, found in Koribacter versatilis (strain Ellin345).